The chain runs to 1441 residues: Probable cleavage and polyadenylation specificity factor subunit 1 (1441 aa).

The protein belongs to the CPSF1 family. In terms of assembly, CPSF is a heterotetramer composed of four distinct subunits 160, 100, 70 and 30 kDa.

It is found in the nucleus. CPSF plays a key role in pre-mRNA 3'-end formation, recognizing the AAUAAA signal sequence and interacting with poly(A)polymerase and other factors to bring about cleavage and poly(A) addition. This subunit is involved in the RNA recognition step of the polyadenylation reaction. This chain is Probable cleavage and polyadenylation specificity factor subunit 1, found in Oryza sativa subsp. japonica (Rice).